Consider the following 588-residue polypeptide: Sperm-associated microtubule inner protein 4 (588 aa).

Thr-219 is modified (phosphothreonine). Ser-406, Ser-421, and Ser-427 each carry phosphoserine. Tyr-441 is modified (phosphotyrosine). Residues Ser-457, Ser-484, and Ser-516 each carry the phosphoserine modification.

As to expression, predominantly expressed in the testes.

Its subcellular location is the cytoplasm. The protein resides in the cytoskeleton. It localises to the microtubule organizing center. The protein localises to the centrosome. It is found in the flagellum axoneme. Microtubule inner protein (MIP) part of the dynein-decorated doublet microtubules (DMTs) in flagellum axoneme. May serve to reinforce and thus stabilize the microtubule structure in the sperm flagella. The sequence is that of Sperm-associated microtubule inner protein 4 (Spmip4) from Mus musculus (Mouse).